A 306-amino-acid polypeptide reads, in one-letter code: Mitochondrial 2-oxoglutarate/malate carrier protein (306 aa).

3 Solcar repeats span residues 7 to 95, 103 to 194, and 203 to 292; these read VPNV…LLER, LSFG…AKQA, and DGIF…MNAA. 6 consecutive transmembrane segments (helical) span residues 9–38, 72–93, 108–122, 172–192, 205–226, and 268–286; these read NVVKFAFGGTAGMGATLVVQPLDLVKNRMQ, SAGLLRQATYTTTRLGTYAFLL, KAVLGMTAGGIGSFV, PTVLRAMVVNAAQLATYSQAK, IFCHFLASMISGLATTIASMPV, and FTPYYMRLGPHTVLTFIIL.

This sequence belongs to the mitochondrial carrier (TC 2.A.29) family. In terms of assembly, interacts with ant-1.1 and ced-9. In terms of tissue distribution, ubiquitously expressed, but highly expressed in the anterior pharynx.

It is found in the mitochondrion. The protein localises to the mitochondrion inner membrane. It catalyses the reaction (S)-malate(in) + 2-oxoglutarate(out) = (S)-malate(out) + 2-oxoglutarate(in). It carries out the reaction malonate(in) + 2-oxoglutarate(out) = malonate(out) + 2-oxoglutarate(in). The enzyme catalyses succinate(in) + 2-oxoglutarate(out) = succinate(out) + 2-oxoglutarate(in). The catalysed reaction is maleate(in) + 2-oxoglutarate(out) = maleate(out) + 2-oxoglutarate(in). It catalyses the reaction oxaloacetate(in) + 2-oxoglutarate(out) = oxaloacetate(out) + 2-oxoglutarate(in). In terms of biological role, catalyzes the transport of 2-oxoglutarate (alpha-oxoglutarate) across the inner mitochondrial membrane in an electroneutral exchange for malate. Can also exchange 2-oxoglutarate for other dicarboxylic acids such as malonate, succinate, maleate and oxaloacetate, although with lower affinity. Contributes to several metabolic processes, including the malate-aspartate shuttle, the oxoglutarate/isocitrate shuttle, in gluconeogenesis from lactate, and in nitrogen metabolism. Maintains mitochondrial fusion and fission events, and the organization and morphology of cristae. Regulator of apoptosis, insulin secretion and germline proliferation. Furthermore, plays a role in the oxidative stress response regulating endogenous levels of reactive oxygen species (ROS). Involved in the regulation of lin-35/Rb-mediated apoptosis in the germline. This chain is Mitochondrial 2-oxoglutarate/malate carrier protein, found in Caenorhabditis elegans.